Here is a 394-residue protein sequence, read N- to C-terminus: Na(+)/H(+) antiporter NhaA (394 aa).

The next 11 membrane-spanning stretches (helical) occupy residues 14-34, 59-79, 95-115, 125-145, 154-174, 179-199, 213-233, 254-274, 292-312, 328-348, and 363-383; these read AGGL…NSAL, LLLW…GLEV, VFPA…YLLF, GWAI…ALLG, VFLL…IALF, VSLQ…YMNW, LVLW…GVIV, GLHP…NAGV, IATG…WLAV, IFAV…IASL, and LGIL…LRLV.

Belongs to the NhaA Na(+)/H(+) (TC 2.A.33) antiporter family.

It is found in the cell inner membrane. The catalysed reaction is Na(+)(in) + 2 H(+)(out) = Na(+)(out) + 2 H(+)(in). Na(+)/H(+) antiporter that extrudes sodium in exchange for external protons. In Yersinia pestis bv. Antiqua (strain Angola), this protein is Na(+)/H(+) antiporter NhaA.